The sequence spans 89 residues: Small ribosomal subunit protein bS20 (89 aa).

Positions 1–28 (MANHYSALKRARQTETRTARNRANTSRM) are disordered.

It belongs to the bacterial ribosomal protein bS20 family.

Its function is as follows. Binds directly to 16S ribosomal RNA. This chain is Small ribosomal subunit protein bS20, found in Koribacter versatilis (strain Ellin345).